A 308-amino-acid chain; its full sequence is GTP cyclohydrolase MptA (308 aa).

The interval 282–308 (NDESIHQHNAHAEREVTLGQLRDELDA) is disordered.

It belongs to the GTP cyclohydrolase IV family. As to quaternary structure, homodimer. The cofactor is Fe(2+).

It carries out the reaction GTP + H2O = 7,8-dihydroneopterin 2',3'-cyclic phosphate + formate + diphosphate + H(+). It functions in the pathway cofactor biosynthesis; 5,6,7,8-tetrahydromethanopterin biosynthesis. Its function is as follows. Converts GTP to 7,8-dihydro-D-neopterin 2',3'-cyclic phosphate, the first intermediate in the biosynthesis of coenzyme methanopterin. Involved in archaeosine (G(+)) and folate biosynthesis. The chain is GTP cyclohydrolase MptA from Haloferax volcanii (strain ATCC 29605 / DSM 3757 / JCM 8879 / NBRC 14742 / NCIMB 2012 / VKM B-1768 / DS2) (Halobacterium volcanii).